The following is an 865-amino-acid chain: Alanine--tRNA ligase (865 aa).

Zn(2+) contacts are provided by His-552, His-556, Cys-654, and His-658.

It belongs to the class-II aminoacyl-tRNA synthetase family. Requires Zn(2+) as cofactor.

It localises to the cytoplasm. It catalyses the reaction tRNA(Ala) + L-alanine + ATP = L-alanyl-tRNA(Ala) + AMP + diphosphate. Functionally, catalyzes the attachment of alanine to tRNA(Ala) in a two-step reaction: alanine is first activated by ATP to form Ala-AMP and then transferred to the acceptor end of tRNA(Ala). Also edits incorrectly charged Ser-tRNA(Ala) and Gly-tRNA(Ala) via its editing domain. The sequence is that of Alanine--tRNA ligase from Coxiella burnetii (strain Dugway 5J108-111).